Here is a 293-residue protein sequence, read N- to C-terminus: N-acetylneuraminate lyase (293 aa).

Residues Ser48 and Ser49 each contribute to the aceneuramate site. The active-site Proton donor is Tyr137. Residue Lys165 is the Schiff-base intermediate with substrate of the active site. The aceneuramate site is built by Thr167, Gly189, Asp191, Glu192, and Ser208.

It belongs to the DapA family. NanA subfamily. As to quaternary structure, homotetramer.

The protein resides in the cytoplasm. It catalyses the reaction aceneuramate = aldehydo-N-acetyl-D-mannosamine + pyruvate. It functions in the pathway amino-sugar metabolism; N-acetylneuraminate degradation; D-fructose 6-phosphate from N-acetylneuraminate: step 1/5. Functionally, catalyzes the reversible aldol cleavage of N-acetylneuraminic acid (sialic acid; Neu5Ac) to form pyruvate and N-acetylmannosamine (ManNAc) via a Schiff base intermediate. This chain is N-acetylneuraminate lyase, found in Staphylococcus aureus (strain bovine RF122 / ET3-1).